The following is a 538-amino-acid chain: Chaperonin GroEL (538 aa).

Residues 29 to 32 (TIGP), 86 to 90 (DGTTT), Gly-413, 476 to 478 (NAA), and Asp-492 each bind ATP.

It belongs to the chaperonin (HSP60) family. Forms a cylinder of 14 subunits composed of two heptameric rings stacked back-to-back. Interacts with the co-chaperonin GroES.

It is found in the cytoplasm. The enzyme catalyses ATP + H2O + a folded polypeptide = ADP + phosphate + an unfolded polypeptide.. Its function is as follows. Together with its co-chaperonin GroES, plays an essential role in assisting protein folding. The GroEL-GroES system forms a nano-cage that allows encapsulation of the non-native substrate proteins and provides a physical environment optimized to promote and accelerate protein folding. In Staphylococcus aureus (strain Mu3 / ATCC 700698), this protein is Chaperonin GroEL.